A 256-amino-acid chain; its full sequence is Trans-aconitate 2-methyltransferase (256 aa).

This sequence belongs to the methyltransferase superfamily. Tam family.

It is found in the cytoplasm. It carries out the reaction trans-aconitate + S-adenosyl-L-methionine = (E)-3-(methoxycarbonyl)pent-2-enedioate + S-adenosyl-L-homocysteine. Catalyzes the S-adenosylmethionine monomethyl esterification of trans-aconitate. This is Trans-aconitate 2-methyltransferase from Rhodopseudomonas palustris (strain BisA53).